We begin with the raw amino-acid sequence, 476 residues long: Aspartate kinase Ask_Ect (476 aa).

Residues 405–476 (SAIGSDLKVK…ENHGDVIAAA (72 aa)) form the ACT domain.

This sequence belongs to the aspartokinase family. In terms of assembly, monomer.

The protein resides in the cytoplasm. The catalysed reaction is L-aspartate + ATP = 4-phospho-L-aspartate + ADP. Its pathway is amine and polyamine biosynthesis; ectoine biosynthesis. Its activity is regulated as follows. Allosterically and strongly feedback inhibited by tryptophan. The presence of either 650 mM NaCl or KCl reduces the inhibition by tryptophan. Its function is as follows. Involved in the biosynthesis of L-aspartate-beta-semialdehyde, which is an intermediate in the biosynthesis of ectoine, a highly soluble organic osmolyte, called compatible solute. Ectoine is used to avoid excessive water efflux, plasmolysis, molecular crowding of the cytoplasm, and cessation of growth in high salinity environments. Catalyzes the phosphorylation of the beta-carboxyl group of L-aspartate to yield 4-phospho-L-aspartate. This Stutzerimonas stutzeri (strain A1501) (Pseudomonas stutzeri) protein is Aspartate kinase Ask_Ect (ask).